The following is a 156-amino-acid chain: SsrA-binding protein (156 aa).

The protein belongs to the SmpB family.

The protein localises to the cytoplasm. In terms of biological role, required for rescue of stalled ribosomes mediated by trans-translation. Binds to transfer-messenger RNA (tmRNA), required for stable association of tmRNA with ribosomes. tmRNA and SmpB together mimic tRNA shape, replacing the anticodon stem-loop with SmpB. tmRNA is encoded by the ssrA gene; the 2 termini fold to resemble tRNA(Ala) and it encodes a 'tag peptide', a short internal open reading frame. During trans-translation Ala-aminoacylated tmRNA acts like a tRNA, entering the A-site of stalled ribosomes, displacing the stalled mRNA. The ribosome then switches to translate the ORF on the tmRNA; the nascent peptide is terminated with the 'tag peptide' encoded by the tmRNA and targeted for degradation. The ribosome is freed to recommence translation, which seems to be the essential function of trans-translation. This Staphylococcus epidermidis (strain ATCC 35984 / DSM 28319 / BCRC 17069 / CCUG 31568 / BM 3577 / RP62A) protein is SsrA-binding protein.